Here is a 356-residue protein sequence, read N- to C-terminus: uncharacterized protein (356 aa).

Helical transmembrane passes span Phe-2–Leu-22, Tyr-36–Phe-56, Met-77–Tyr-97, Ile-99–Leu-119, Ile-124–Ile-144, and Leu-154–Ile-174. The GGDEF domain occupies Gln-218–Ile-353.

It is found in the cell membrane. This is an uncharacterized protein from Staphylococcus saprophyticus subsp. saprophyticus (strain ATCC 15305 / DSM 20229 / NCIMB 8711 / NCTC 7292 / S-41).